The chain runs to 490 residues: MSQTTVPVDRIVPFHRFDDAIGLRNSILVWTLRFDDVLDAAKLRDSLNALLSIGNWKRLGGRVRKKRDGKLEVHIPESFTPQHPAADFSHTKLDCCIDEHALGRRLPVATEKPKLYESSTIFHEFATRENPPLTIEDYCNSDLPQIGLHVVSFTDATLVSVSWPHTMSDAVGIQTLLINWSRVMAGREIEVQHLEDVESNPLDNLEAGEGGTLKQEEWILKSSLVTGVWFVIWVIRYIWTIIWVSQESKLIYLPARTIKALRREAEDSLVEQTQTLVPGHLEKPFVSDGDVITAWAVRMACLHQASQQTSQQSITIINALDVRARLPDLFKQNTAYVGNFAFALFTKTTVGQVMSTSLGELAHTVRRSLLEQVPQAQIRAMFQELRKTRMGALIVGTATSSPLIFSNWSKTKICEVVDFSPAVIRPGKQGPVISEPGKPVYHHSLHTKRSQTARDAFNILGKDPAGNYWIAAWLPPCAWPRIKEEMQKLP.

The active-site Proton acceptor is the His165.

This sequence belongs to the plant acyltransferase family.

Its pathway is mycotoxin biosynthesis. O-acetyltransferase; part of the 2 gene clusters that mediate the biosynthesis of fusicoccins, diterpene glucosides that display phytohormone-like activity and function as potent activators of plasma membrane H(+)-ATPases in plants by modifying 14-3-3 proteins and cause the plant disease constriction canker. The first step in the pathway is performed by the fusicoccadiene synthase PaFS that possesses both prenyl transferase and terpene cyclase activity, converting isopentenyl diphosphate and dimethylallyl diphosphate into geranylgeranyl diphosphate (GGDP) and successively converting GGDP into fusicocca-2,10(14)-diene, a precursor for fusicoccin H. The second step is the oxidation at the C-8 position by the cytochrome P450 monooxygenase PaP450-2 to yield fusicocca-2,10(14)-diene-8-beta-ol. The cytochrome P450 monooxygenase PaP450-1 then catalyzes the hydroxylation at the C-16 position to produce fusicocca-2,10(14)-diene-8-beta,16-diol. The dioxygenase fc-dox then catalyzes the 16-oxydation of fusicocca-2,10(14)-diene-8-beta,16-diol to yield an aldehyde (8-beta-hydroxyfusicocca-1,10(14)-dien-16-al). The short-chain dehydrogenase/reductase fc-sdr catalyzes the reduction of the aldehyde to yield fusicocca-1,10(14)-diene-8-beta,16-diol. The next step is the hydroxylation at C-9 performed by the cytochrome P450 monooxygenase PaP450-3 that leads to fusicoccin H aglycon which is glycosylated to fusicoccin H by the O-glycosyltransferase PaGT. Hydroxylation at C-12 by the cytochrome P450 monooxygenase PaP450-4 leads then to the production of fusicoccin Q and is followed by methylation by the O-methyltransferase PaMT to yield fusicoccin P. Fusicoccin P is further converted to fusicoccin J via prenylation by the O-glucose prenyltransferase PaPT. Cytochrome P450 monooxygenase PaP450-5 then performs hydroxylation at C-19 to yield dideacetyl-fusicoccin A which is acetylated to 3'-O-deacetyl-fusicoccin A by the O-acetyltransferase PaAT-2. Finally, a another acetylation by the O-acetyltransferase PaAT-1 yields fusicoccin A. This chain is O-acetyltransferase PaAT-2, found in Phomopsis amygdali (Fusicoccum amygdali).